The primary structure comprises 77 residues: Sec-independent protein translocase protein TatA (77 aa).

The helical transmembrane segment at 1–21 (MGSLSIWHWIVVIAVVLLLFG) threads the bilayer. The segment covering 43–60 (MQDDDKAPEKTEPVKSID) has biased composition (basic and acidic residues). The interval 43–77 (MQDDDKAPEKTEPVKSIDHGATPSATRTDVGSKAV) is disordered.

The protein belongs to the TatA/E family. The Tat system comprises two distinct complexes: a TatABC complex, containing multiple copies of TatA, TatB and TatC subunits, and a separate TatA complex, containing only TatA subunits. Substrates initially bind to the TatABC complex, which probably triggers association of the separate TatA complex to form the active translocon.

The protein resides in the cell inner membrane. Functionally, part of the twin-arginine translocation (Tat) system that transports large folded proteins containing a characteristic twin-arginine motif in their signal peptide across membranes. TatA could form the protein-conducting channel of the Tat system. This is Sec-independent protein translocase protein TatA from Bradyrhizobium sp. (strain BTAi1 / ATCC BAA-1182).